Consider the following 151-residue polypeptide: ATP synthase subunit b' (151 aa).

A helical membrane pass occupies residues 18 to 38; the sequence is TLPLMALQVVLLTFILNALFF.

This sequence belongs to the ATPase B chain family. As to quaternary structure, F-type ATPases have 2 components, F(1) - the catalytic core - and F(0) - the membrane proton channel. F(1) has five subunits: alpha(3), beta(3), gamma(1), delta(1), epsilon(1). F(0) has four main subunits: a(1), b(1), b'(1) and c(10-14). The alpha and beta chains form an alternating ring which encloses part of the gamma chain. F(1) is attached to F(0) by a central stalk formed by the gamma and epsilon chains, while a peripheral stalk is formed by the delta, b and b' chains.

Its subcellular location is the cellular thylakoid membrane. F(1)F(0) ATP synthase produces ATP from ADP in the presence of a proton or sodium gradient. F-type ATPases consist of two structural domains, F(1) containing the extramembraneous catalytic core and F(0) containing the membrane proton channel, linked together by a central stalk and a peripheral stalk. During catalysis, ATP synthesis in the catalytic domain of F(1) is coupled via a rotary mechanism of the central stalk subunits to proton translocation. Its function is as follows. Component of the F(0) channel, it forms part of the peripheral stalk, linking F(1) to F(0). The b'-subunit is a diverged and duplicated form of b found in plants and photosynthetic bacteria. In Prochlorococcus marinus (strain MIT 9303), this protein is ATP synthase subunit b'.